We begin with the raw amino-acid sequence, 239 residues long: Fatty acid metabolism regulator protein (239 aa).

The HTH gntR-type domain occupies 6-74 (QSPAGFAEEY…HGKPTKVNNF (69 aa)). The segment at residues 34-53 (ERELSELIGVTRTTLREVLQ) is a DNA-binding region (H-T-H motif).

As to quaternary structure, homodimer.

It localises to the cytoplasm. In terms of biological role, multifunctional regulator of fatty acid metabolism. Represses transcription of at least eight genes required for fatty acid transport and beta-oxidation including fadA, fadB, fadD, fadL and fadE. Activates transcription of at least three genes required for unsaturated fatty acid biosynthesis: fabA, fabB and iclR, the gene encoding the transcriptional regulator of the aceBAK operon encoding the glyoxylate shunt enzymes. Binding of FadR is specifically inhibited by long chain fatty acyl-CoA compounds. The protein is Fatty acid metabolism regulator protein of Salmonella typhimurium (strain LT2 / SGSC1412 / ATCC 700720).